A 341-amino-acid polypeptide reads, in one-letter code: HTH-type transcriptional repressor PurR (341 aa).

One can recognise an HTH lacI-type domain in the interval 2 to 56 (ATIKDVAKRANVSTTTVSHVINKTRFVAEETRNAVWAAIKELHYSPSAVARSLKV). The H-T-H motif DNA-binding region spans 4 to 23 (IKDVAKRANVSTTTVSHVIN). The DNA-binding element occupies 48–56 (SAVARSLKV). Hypoxanthine-binding residues include Tyr-73, Arg-190, Thr-192, Phe-221, and Asp-275.

In terms of assembly, homodimer.

It participates in purine metabolism; purine nucleotide biosynthesis [regulation]. Functionally, is the main repressor of the genes involved in the de novo synthesis of purine nucleotides, regulating purB, purC, purEK, purF, purHD, purL, purMN and guaBA expression. PurR is allosterically activated to bind its cognate DNA by binding the purine corepressors, hypoxanthine or guanine, thereby effecting transcription repression. This chain is HTH-type transcriptional repressor PurR, found in Salmonella typhimurium (strain LT2 / SGSC1412 / ATCC 700720).